Consider the following 172-residue polypeptide: MSKVKKNEETLSEVLVDVNRITKVVKGGRRFAFSACMVVGDKAGRVGAGHGKAKEVNEARGKAKQAAKKRMMKVPLYQNRTIHHDVIGKSGAAKVILRRAKAGTGVIAGGSMRAIFHSLGVHDIVAKSIGSTNVYAMISATFDALNKLASPKSIAMRRDKRVNEISVKSYDV.

Positions 11-74 (LSEVLVDVNR…QAAKKRMMKV (64 aa)) constitute an S5 DRBM domain.

The protein belongs to the universal ribosomal protein uS5 family. Part of the 30S ribosomal subunit. Contacts proteins S4 and S8.

Functionally, with S4 and S12 plays an important role in translational accuracy. In terms of biological role, located at the back of the 30S subunit body where it stabilizes the conformation of the head with respect to the body. The sequence is that of Small ribosomal subunit protein uS5 from Rickettsia canadensis (strain McKiel).